Reading from the N-terminus, the 163-residue chain is Nucleotide-binding protein tll0793 (163 aa).

The protein belongs to the YajQ family.

Functionally, nucleotide-binding protein. This chain is Nucleotide-binding protein tll0793, found in Thermosynechococcus vestitus (strain NIES-2133 / IAM M-273 / BP-1).